Reading from the N-terminus, the 298-residue chain is Release factor glutamine methyltransferase (298 aa).

S-adenosyl-L-methionine-binding positions include 131-135 (GTGTG), Asp-162, Trp-189, and Asn-205. 205 to 208 (NPPY) contacts substrate.

The protein belongs to the protein N5-glutamine methyltransferase family. PrmC subfamily.

The enzyme catalyses L-glutaminyl-[peptide chain release factor] + S-adenosyl-L-methionine = N(5)-methyl-L-glutaminyl-[peptide chain release factor] + S-adenosyl-L-homocysteine + H(+). Its function is as follows. Methylates the class 1 translation termination release factors RF1/PrfA and RF2/PrfB on the glutamine residue of the universally conserved GGQ motif. This is Release factor glutamine methyltransferase from Pasteurella multocida (strain Pm70).